We begin with the raw amino-acid sequence, 64 residues long: Conotoxin Im11.1 (64 aa).

Positions 1–26 (MMFRLTSVSCFLLVIACLNLVVLTNA) are cleaved as a signal peptide. 4 disulfide bridges follow: Cys27–Cys41, Cys34–Cys46, Cys40–Cys50, and Cys45–Cys54. Asn57 bears the Asparagine amide mark. A propeptide spanning residues 61–64 (ATFQ) is cleaved from the precursor.

It belongs to the conotoxin I2 superfamily. In terms of tissue distribution, expressed by the venom duct.

It is found in the secreted. The sequence is that of Conotoxin Im11.1 from Conus imperialis (Imperial cone).